Consider the following 430-residue polypeptide: Rho GTPase-activating protein 2 (430 aa).

A disordered region spans residues 1–36 (MTGLVMMTKGGGCGGGGKGGRRKSTAEEEEEEEQNQ). The span at 9–18 (KGGGCGGGGK) shows a compositional bias: gly residues. In terms of domain architecture, CRIB spans 80–93 (IGWPTNVRHITHVT). The region spanning 125-310 (VSAESMQCSY…TLAEREENAT (186 aa)) is the Rho-GAP domain. Residues 307 to 372 (ENATGSEGYS…HLSRHSTHED (66 aa)) form a disordered region. Over residues 316-326 (SPSHSSNSQTD) the composition is skewed to low complexity. Acidic residues predominate over residues 347–356 (ECGEEEEVEE). Basic and acidic residues predominate over residues 357 to 371 (VEQHQEHLSRHSTHE).

Homodimerizes via its Rho-GAP domain and forms a tetrameric complex (2:2) with ARAC1/ROP3, ARAC2/ROP7, ARAC4/ROP2, ARAC5/ROP4, ARAC7/ROP9 or ARAC11/ROP1.

Acts as a GTPase activator for the Rac-type GTPase by converting it to an inactive GDP-bound state. The polypeptide is Rho GTPase-activating protein 2 (ROPGAP2) (Arabidopsis thaliana (Mouse-ear cress)).